A 281-amino-acid chain; its full sequence is Bifunctional protein FolD (281 aa).

Residues 165–167 (GRG), threonine 192, and valine 233 contribute to the NADP(+) site.

The protein belongs to the tetrahydrofolate dehydrogenase/cyclohydrolase family. In terms of assembly, homodimer.

It catalyses the reaction (6R)-5,10-methylene-5,6,7,8-tetrahydrofolate + NADP(+) = (6R)-5,10-methenyltetrahydrofolate + NADPH. It carries out the reaction (6R)-5,10-methenyltetrahydrofolate + H2O = (6R)-10-formyltetrahydrofolate + H(+). Its pathway is one-carbon metabolism; tetrahydrofolate interconversion. Catalyzes the oxidation of 5,10-methylenetetrahydrofolate to 5,10-methenyltetrahydrofolate and then the hydrolysis of 5,10-methenyltetrahydrofolate to 10-formyltetrahydrofolate. This chain is Bifunctional protein FolD, found in Mycobacterium avium (strain 104).